The following is a 217-amino-acid chain: UPF0502 protein VFMJ11_A0613 (217 aa).

This sequence belongs to the UPF0502 family.

This Aliivibrio fischeri (strain MJ11) (Vibrio fischeri) protein is UPF0502 protein VFMJ11_A0613.